The sequence spans 169 residues: Anaerobic nitrite reductase NSHB3 (169 aa).

A Globin domain is found at 15–165; sequence RFTEEQEALV…LVAAIKQGMK (151 aa). The Homodimerization motif lies at 48-52; it reads EVAPS. Heme b-binding residues include Ser58, Lys72, His76, Arg106, Thr110, and His111. A Homodimerization motif is present at residues 118–130; the sequence is DAHFEVAKFALLE.

The protein belongs to the plant globin family. As to quaternary structure, homodimer. Requires heme b as cofactor.

Its subcellular location is the cytoplasm. The protein localises to the nucleus. The catalysed reaction is Fe(III)-heme b-[protein] + nitric oxide + H2O = Fe(II)-heme b-[protein] + nitrite + 2 H(+). Its function is as follows. Phytoglobin that reduces nitrite to nitric oxide under anoxic conditions (e.g. during flooding or in waterlogged soil). May not function as an oxygen storage or transport protein. Has an unusually high affinity for O(2) through an hexacoordinate heme iron because of a very low dissociation constant. This is Anaerobic nitrite reductase NSHB3 from Oryza sativa subsp. indica (Rice).